Reading from the N-terminus, the 386-residue chain is tRNA N6-adenosine threonylcarbamoyltransferase (386 aa).

Residues H112 and H116 each contribute to the Fe cation site. Residues 134–138, D167, G180, and N322 contribute to the substrate site; that span reads LASGG. Position 350 (D350) interacts with Fe cation.

The protein belongs to the KAE1 / TsaD family. It depends on Fe(2+) as a cofactor.

The protein resides in the cytoplasm. It catalyses the reaction L-threonylcarbamoyladenylate + adenosine(37) in tRNA = N(6)-L-threonylcarbamoyladenosine(37) in tRNA + AMP + H(+). In terms of biological role, required for the formation of a threonylcarbamoyl group on adenosine at position 37 (t(6)A37) in tRNAs that read codons beginning with adenine. Is involved in the transfer of the threonylcarbamoyl moiety of threonylcarbamoyl-AMP (TC-AMP) to the N6 group of A37, together with TsaE and TsaB. TsaD likely plays a direct catalytic role in this reaction. In Rickettsia akari (strain Hartford), this protein is tRNA N6-adenosine threonylcarbamoyltransferase.